A 248-amino-acid polypeptide reads, in one-letter code: Proteasome subunit alpha type-5 (248 aa).

The protein belongs to the peptidase T1A family. In terms of assembly, the 26S proteasome consists of a 20S proteasome core and two 19S regulatory subunits. The 20S proteasome core is composed of 28 subunits that are arranged in four stacked rings, resulting in a barrel-shaped structure. The two end rings are each formed by seven alpha subunits, and the two central rings are each formed by seven beta subunits. The catalytic chamber with the active sites is on the inside of the barrel.

The protein localises to the cytoplasm. It is found in the nucleus. In terms of biological role, the proteasome is a multicatalytic proteinase complex which is characterized by its ability to cleave peptides with Arg, Phe, Tyr, Leu, and Glu adjacent to the leaving group at neutral or slightly basic pH. The proteasome has an ATP-dependent proteolytic activity. The polypeptide is Proteasome subunit alpha type-5 (pas-5) (Caenorhabditis elegans).